The chain runs to 188 residues: M-phase phosphoprotein 6 homolog (188 aa).

Positions 93–188 (EENVDEKDVS…NKNKKKKKRN (96 aa)) are disordered. Basic and acidic residues predominate over residues 120–149 (LTERERRKQELVSKKAEASRKMEVKAPAKE). A Phosphoserine modification is found at Ser-167. Over residues 174 to 188 (RKTKKNKNKKKKKRN) the composition is skewed to basic residues.

The protein belongs to the MPP6 family. As to quaternary structure, associates with the RNA exosome complex.

The protein resides in the nucleus. Its function is as follows. RNA-binding protein that associates with the RNA exosome complex. In Schizosaccharomyces pombe (strain 972 / ATCC 24843) (Fission yeast), this protein is M-phase phosphoprotein 6 homolog.